We begin with the raw amino-acid sequence, 368 residues long: GDSL esterase/lipase At4g16230 (368 aa).

The signal sequence occupies residues 1–24 (MSLLVFLCQIIVLSVLFFSEVCLA). The active-site Nucleophile is the S37. 2 N-linked (GlcNAc...) asparagine glycosylation sites follow: N117 and N286. Active-site residues include D329 and H332.

Belongs to the 'GDSL' lipolytic enzyme family.

It localises to the secreted. The sequence is that of GDSL esterase/lipase At4g16230 from Arabidopsis thaliana (Mouse-ear cress).